Here is a 755-residue protein sequence, read N- to C-terminus: Leucine-rich repeat-containing protein 36 (755 aa).

2 LRR repeats span residues 51–72 and 73–94; these read SLRS…QYLC and SLQE…SRLQ. The 40-residue stretch at 107–146 folds into the LRRCT domain; that stretch reads NPVVRKDTDYRLFAVYTLQTLEKLDDRAVRDSERRAAKLH. Disordered regions lie at residues 354–374 and 448–517; these read GKNY…TTSH and LPPG…PPIS. Over residues 356–370 the composition is skewed to basic and acidic residues; sequence NYREHSIKPSQDKKA. Residues 498–510 show a composition bias toward low complexity; that stretch reads LSSDLGSLHGLSG. Positions 601–671 form a coiled coil; that stretch reads VESLKQKLVK…ELTQLKRLEE (71 aa). Positions 701–755 are disordered; it reads YSGKSLLPPEKSHPLGRSSPFGKSTLSSSSPMVHDTGQYLIQSVSEADPEPSLWS. Polar residues predominate over residues 721–731; that stretch reads FGKSTLSSSSP.

This is Leucine-rich repeat-containing protein 36 (Lrrc36) from Mus musculus (Mouse).